The chain runs to 168 residues: uncharacterized protein (168 aa).

This is an uncharacterized protein from Bacillus subtilis (strain 168).